Here is a 203-residue protein sequence, read N- to C-terminus: Urease accessory protein UreG (203 aa).

Residue 14–21 participates in GTP binding; it reads GPVGSGKT.

This sequence belongs to the SIMIBI class G3E GTPase family. UreG subfamily. Homodimer. UreD, UreF and UreG form a complex that acts as a GTP-hydrolysis-dependent molecular chaperone, activating the urease apoprotein by helping to assemble the nickel containing metallocenter of UreC. The UreE protein probably delivers the nickel.

The protein resides in the cytoplasm. Its function is as follows. Facilitates the functional incorporation of the urease nickel metallocenter. This process requires GTP hydrolysis, probably effectuated by UreG. The polypeptide is Urease accessory protein UreG (Allorhizobium ampelinum (strain ATCC BAA-846 / DSM 112012 / S4) (Agrobacterium vitis (strain S4))).